The sequence spans 288 residues: Small ribosomal subunit protein uS15m (288 aa).

The N-terminal 50 residues, 1-50 (MRLFEGAFQPWKLASTNLMQQCLLLNKKSQFHTTCILQGLKKQKANQRRK), are a transit peptide targeting the mitochondrion.

Belongs to the universal ribosomal protein uS15 family. In terms of assembly, component of the mitochondrial small ribosomal subunit (mt-SSU). Mature yeast 74S mitochondrial ribosomes consist of a small (37S) and a large (54S) subunit. The 37S small subunit contains a 15S ribosomal RNA (15S mt-rRNA) and at least 32 different proteins. The 54S large subunit contains a 21S rRNA (21S mt-rRNA) and at least 45 different proteins.

The protein localises to the mitochondrion. Component of the mitochondrial ribosome (mitoribosome), a dedicated translation machinery responsible for the synthesis of mitochondrial genome-encoded proteins, including at least some of the essential transmembrane subunits of the mitochondrial respiratory chain. The mitoribosomes are attached to the mitochondrial inner membrane and translation products are cotranslationally integrated into the membrane. The protein is Small ribosomal subunit protein uS15m (mrps28) of Schizosaccharomyces pombe (strain 972 / ATCC 24843) (Fission yeast).